A 360-amino-acid polypeptide reads, in one-letter code: Serine/threonine-protein phosphatase 2A activator 2 (360 aa).

Belongs to the PTPA-type PPIase family.

The protein resides in the cytoplasm. The catalysed reaction is [protein]-peptidylproline (omega=180) = [protein]-peptidylproline (omega=0). Its function is as follows. PPIases accelerate the folding of proteins. It catalyzes the cis-trans isomerization of proline imidic peptide bonds in oligopeptides. Acts as a regulatory subunit for PP2A-like phosphatases modulating their activity or substrate specificity, probably by inducing a conformational change in the catalytic subunit, a direct target of the PPIase. Can reactivate inactive phosphatase PP2A-phosphatase methylesterase complexes (PP2Ai) in presence of ATP and Mg(2+) by dissociating the inactive form from the complex. In Kluyveromyces lactis (strain ATCC 8585 / CBS 2359 / DSM 70799 / NBRC 1267 / NRRL Y-1140 / WM37) (Yeast), this protein is Serine/threonine-protein phosphatase 2A activator 2 (RRD2).